A 696-amino-acid chain; its full sequence is F-box/LRR-repeat protein 5 (696 aa).

Residues 1-159 (MAPFPDEVDV…IKKQVIAQHS (159 aa)) form a hemerythrin-like region. Fe(3+)-binding residues include H15, H57, E58, E61, H80, H126, and E130. The 47-residue stretch at 205–251 (STHISQLPTEILLCLFRYLGPEDLCHCGQVCSAWSDLAKTGSLWRHL) folds into the F-box domain. LRR repeat units lie at residues 343–367 (SSTV…LDLT), 368–395 (QTDV…DLSG), 396–421 (CEKL…TCSE), 582–612 (CSSG…SLSG), 613–640 (CYQV…NLSG), and 641–666 (CLLI…HFYY). Residues C667, C681, C691, and C692 each contribute to the [2Fe-2S] cluster site.

Part of a SCF (SKP1-cullin-F-box) protein ligase complex. The cofactor is [2Fe-2S] cluster. Ubiquitinated upon iron and oxygen depletion, leading to its degradation by the proteasome. Ubiquitination is regulated by the hemerythrin-like region that acts as an oxygen and iron sensor.

It localises to the cytoplasm. The protein resides in the perinuclear region. The protein localises to the nucleus. Its pathway is protein modification; protein ubiquitination. Its function is as follows. Component of some SCF (SKP1-cullin-F-box) protein ligase complex that plays a central role in iron homeostasis by promoting the ubiquitination and subsequent degradation of ireb2/irp2. Upon high iron and oxygen level, it specifically recognizes and binds ireb2/irp2, promoting its ubiquitination and degradation by the proteasome. In Salmo salar (Atlantic salmon), this protein is F-box/LRR-repeat protein 5 (fbxl5).